Here is a 251-residue protein sequence, read N- to C-terminus: 1-(5-phosphoribosyl)-5-[(5-phosphoribosylamino)methylideneamino] imidazole-4-carboxamide isomerase (251 aa).

The active-site Proton acceptor is the Asp8. Catalysis depends on Asp131, which acts as the Proton donor.

Belongs to the HisA/HisF family.

It localises to the cytoplasm. It catalyses the reaction 1-(5-phospho-beta-D-ribosyl)-5-[(5-phospho-beta-D-ribosylamino)methylideneamino]imidazole-4-carboxamide = 5-[(5-phospho-1-deoxy-D-ribulos-1-ylimino)methylamino]-1-(5-phospho-beta-D-ribosyl)imidazole-4-carboxamide. Its pathway is amino-acid biosynthesis; L-histidine biosynthesis; L-histidine from 5-phospho-alpha-D-ribose 1-diphosphate: step 4/9. The polypeptide is 1-(5-phosphoribosyl)-5-[(5-phosphoribosylamino)methylideneamino] imidazole-4-carboxamide isomerase (Burkholderia cenocepacia (strain HI2424)).